The chain runs to 113 residues: Large ribosomal subunit protein uL24 (113 aa).

This sequence belongs to the universal ribosomal protein uL24 family. Part of the 50S ribosomal subunit.

One of two assembly initiator proteins, it binds directly to the 5'-end of the 23S rRNA, where it nucleates assembly of the 50S subunit. Functionally, one of the proteins that surrounds the polypeptide exit tunnel on the outside of the subunit. The protein is Large ribosomal subunit protein uL24 of Rickettsia typhi (strain ATCC VR-144 / Wilmington).